The sequence spans 234 residues: UPF0502 protein Bphy_5360 (234 aa).

It belongs to the UPF0502 family.

The protein is UPF0502 protein Bphy_5360 of Paraburkholderia phymatum (strain DSM 17167 / CIP 108236 / LMG 21445 / STM815) (Burkholderia phymatum).